We begin with the raw amino-acid sequence, 337 residues long: Adenosine deaminase (337 aa).

Residues H15 and H17 each coordinate Zn(2+). Positions 17, 19, and 172 each coordinate substrate. H199 serves as a coordination point for Zn(2+). E202 functions as the Proton donor in the catalytic mechanism. D279 serves as a coordination point for Zn(2+).

Belongs to the metallo-dependent hydrolases superfamily. Adenosine and AMP deaminases family. Adenosine deaminase subfamily. The cofactor is Zn(2+).

It carries out the reaction adenosine + H2O + H(+) = inosine + NH4(+). The catalysed reaction is 2'-deoxyadenosine + H2O + H(+) = 2'-deoxyinosine + NH4(+). In terms of biological role, catalyzes the hydrolytic deamination of adenosine and 2-deoxyadenosine. This chain is Adenosine deaminase, found in Enterococcus faecalis (strain ATCC 700802 / V583).